A 341-amino-acid chain; its full sequence is Dihydroorotate dehydrogenase (quinone) (341 aa).

Residues 61 to 65 (AGLDK) and Thr85 each bind FMN. A substrate-binding site is contributed by Lys65. 110-114 (NRMGF) is a binding site for substrate. Residues Asn138 and Asn171 each coordinate FMN. Asn171 contributes to the substrate binding site. Catalysis depends on Ser174, which acts as the Nucleophile. Position 176 (Asn176) interacts with substrate. FMN contacts are provided by Lys216 and Thr244. Substrate is bound at residue 245 to 246 (NT). Residues Gly267, Gly296, and 317–318 (YS) each bind FMN.

This sequence belongs to the dihydroorotate dehydrogenase family. Type 2 subfamily. As to quaternary structure, monomer. FMN serves as cofactor.

The protein resides in the cell membrane. The catalysed reaction is (S)-dihydroorotate + a quinone = orotate + a quinol. It functions in the pathway pyrimidine metabolism; UMP biosynthesis via de novo pathway; orotate from (S)-dihydroorotate (quinone route): step 1/1. Catalyzes the conversion of dihydroorotate to orotate with quinone as electron acceptor. The sequence is that of Dihydroorotate dehydrogenase (quinone) from Pseudomonas putida (strain W619).